The following is a 168-amino-acid chain: Cyclic pyranopterin monophosphate synthase (168 aa).

Substrate-binding positions include 83-85 (LCH) and 121-122 (ME). Asp136 is an active-site residue.

This sequence belongs to the MoaC family. In terms of assembly, homohexamer; trimer of dimers.

The enzyme catalyses (8S)-3',8-cyclo-7,8-dihydroguanosine 5'-triphosphate = cyclic pyranopterin phosphate + diphosphate. It participates in cofactor biosynthesis; molybdopterin biosynthesis. Catalyzes the conversion of (8S)-3',8-cyclo-7,8-dihydroguanosine 5'-triphosphate to cyclic pyranopterin monophosphate (cPMP). This Nostoc sp. (strain PCC 7120 / SAG 25.82 / UTEX 2576) protein is Cyclic pyranopterin monophosphate synthase.